The chain runs to 524 residues: Peptide chain release factor 3 (524 aa).

Residues 8–276 (NKRRTFAIIS…GFAKYAPAPE (269 aa)) enclose the tr-type G domain. GTP contacts are provided by residues 17–24 (SHPDAGKT), 85–89 (DTPGH), and 139–142 (NKLD).

The protein belongs to the TRAFAC class translation factor GTPase superfamily. Classic translation factor GTPase family. PrfC subfamily.

The protein resides in the cytoplasm. In terms of biological role, increases the formation of ribosomal termination complexes and stimulates activities of RF-1 and RF-2. It binds guanine nucleotides and has strong preference for UGA stop codons. It may interact directly with the ribosome. The stimulation of RF-1 and RF-2 is significantly reduced by GTP and GDP, but not by GMP. The sequence is that of Peptide chain release factor 3 from Hydrogenovibrio crunogenus (strain DSM 25203 / XCL-2) (Thiomicrospira crunogena).